Here is a 175-residue protein sequence, read N- to C-terminus: Pituitary adenylate cyclase-activating polypeptide (175 aa).

An N-terminal signal peptide occupies residues 1–24; that stretch reads MTMCSGARLALLVYGIIMHNSVSC. The propeptide occupies 25 to 78; it reads SPAAGLSFPGIRPEEEAYDQDGNPLQDFYDWDPPGAGSPASALRDAYALYYPAD. The segment at 149–157 is important for receptor binding; sequence VKKYLAAVL. Leucine amide is present on leucine 157. Lysine amide is present on lysine 168. A propeptide spanning residues 172 to 175 is cleaved from the precursor; the sequence is IAYL.

The protein belongs to the glucagon family.

It is found in the secreted. In terms of biological role, PACAP is a neuropeptide involved in diverse array of physiological processes through activating the PACAP subfamily of class B1 G protein-coupled receptors: VIP receptor 1 (VIPR1), VIP receptor 2 (VIPR2), and PACAP type I receptor (ADCYAP1R1). Exerts neuroprotective and general cytoprotective effects due to anti-apoptotic, anti-inflammatory, and antioxidant actions. Promotes neuron projection development through the RAPGEF2/Rap1/B-Raf/ERK pathway. In chromaffin cells, induces long-lasting increase of intracellular calcium concentrations and neuroendocrine secretion. Involved in the control of glucose homeostasis, induces insulin secretion by pancreatic beta cells. PACAP exists in two bioactive forms from proteolysis of the same precursor protein, PACAP27 and PACAP38, which differ by eleven amino acid residues in the C-terminus. This chain is Pituitary adenylate cyclase-activating polypeptide (Adcyap1), found in Rattus norvegicus (Rat).